We begin with the raw amino-acid sequence, 347 residues long: MALVPVGMAPRQMRVNRCIFASIVSFDACITYKSPCSPDAYHDDGWFICNNHLIKRFKMSKMVLPIFDEDDNQFKMTIARHLVGNKERGIKRILIPSATNYQDVFNLNSMMQAEQLIFHLIYNNENAVNTICDNLKYTEGFTSNTQRVIHSVYATTKSILDTTNPNTFCSRVSRDELRFFDVTNARALRGGAGDQLFNNYSGFLQNLIRRAVAPEYLQIDTEELRFRNCATCIIDETGLVASVPDGPELYNPIRSSDIMRSQPNRLQIRNVLKFEGDTRELDRTLSGYEEYPTYVPLFLGYQIINSENNFLRNDFIPRANPNATLGGGAVAGPAPGVAGEAGGGIAV.

This sequence belongs to the baculoviridae major capsid protein family.

The protein resides in the virion. Most abundant structural protein of the nucleocapsid produced during the infection cycle. The monomers are arranged in stacked rings around the nucleoprotein core. In Autographa californica nuclear polyhedrosis virus (AcMNPV), this protein is Major capsid protein (P39).